A 397-amino-acid chain; its full sequence is CCA-adding enzyme (397 aa).

ATP-binding residues include glycine 26 and arginine 29. Residues glycine 26 and arginine 29 each coordinate CTP. Mg(2+) is bound by residues aspartate 39 and aspartate 41. ATP is bound by residues arginine 110, aspartate 153, arginine 156, arginine 159, and arginine 162. Residues arginine 110, aspartate 153, arginine 156, arginine 159, and arginine 162 each contribute to the CTP site.

It belongs to the tRNA nucleotidyltransferase/poly(A) polymerase family. Bacterial CCA-adding enzyme type 3 subfamily. In terms of assembly, homodimer. The cofactor is Mg(2+).

It carries out the reaction a tRNA precursor + 2 CTP + ATP = a tRNA with a 3' CCA end + 3 diphosphate. The catalysed reaction is a tRNA with a 3' CCA end + 2 CTP + ATP = a tRNA with a 3' CCACCA end + 3 diphosphate. Its function is as follows. Catalyzes the addition and repair of the essential 3'-terminal CCA sequence in tRNAs without using a nucleic acid template. Adds these three nucleotides in the order of C, C, and A to the tRNA nucleotide-73, using CTP and ATP as substrates and producing inorganic pyrophosphate. tRNA 3'-terminal CCA addition is required both for tRNA processing and repair. Also involved in tRNA surveillance by mediating tandem CCA addition to generate a CCACCA at the 3' terminus of unstable tRNAs. While stable tRNAs receive only 3'-terminal CCA, unstable tRNAs are marked with CCACCA and rapidly degraded. This Bacillus cereus (strain G9842) protein is CCA-adding enzyme.